Consider the following 547-residue polypeptide: Chaperonin GroEL (547 aa).

ATP contacts are provided by residues 30 to 33 (TLGP), Lys-51, 87 to 91 (DGTTT), Gly-415, and Asp-496. The interval 527–547 (KKDSPAMPGGGGMGGMGGMDF) is disordered. Over residues 534-547 (PGGGGMGGMGGMDF) the composition is skewed to gly residues.

This sequence belongs to the chaperonin (HSP60) family. As to quaternary structure, forms a cylinder of 14 subunits composed of two heptameric rings stacked back-to-back. Interacts with the co-chaperonin GroES.

The protein localises to the cytoplasm. The enzyme catalyses ATP + H2O + a folded polypeptide = ADP + phosphate + an unfolded polypeptide.. In terms of biological role, together with its co-chaperonin GroES, plays an essential role in assisting protein folding. The GroEL-GroES system forms a nano-cage that allows encapsulation of the non-native substrate proteins and provides a physical environment optimized to promote and accelerate protein folding. The sequence is that of Chaperonin GroEL from Methylocella silvestris (strain DSM 15510 / CIP 108128 / LMG 27833 / NCIMB 13906 / BL2).